The chain runs to 228 residues: Ankyrin repeat domain-containing protein 46 (228 aa).

4 ANK repeats span residues 11-40 (QTNVPLLQACIDGDFNYSKRLLESGFDPNI), 44-73 (RGRTGLHLAAARGNVDICQLLHKFGADLLA), 77-103 (QGNTALHLCGHVDTIQFLVSNGLKIDI), and 107-138 (QGATPLVLAKRRGVNKDVIRLLESLEEQEVKG). Residues 195–215 (VLLLIFVIALLSLGIAYYVSG) form a helical membrane-spanning segment.

Its subcellular location is the membrane. This is Ankyrin repeat domain-containing protein 46 (ANKRD46) from Bos taurus (Bovine).